We begin with the raw amino-acid sequence, 209 residues long: MNLFQNAKFFTTVNHLKDLPDTPLEIAFVGRSNAGKSSAINTLTNHVRLAYVSKTPGRTQHINFFELQNGNFMVDLPGYGYAQVPEAVRAHWVNLLGDYLRHRKQLIGLVLIMDARHPLKELDIRMLDFFHTTGRPVHILLSKADKLSKNEQIKTLSQVKKLLKPYSDRQNISVQLFSSLKKQGIDEANRTVGSWFDAADAAASSPEEN.

Positions 22-198 (TPLEIAFVGR…NRTVGSWFDA (177 aa)) constitute an EngB-type G domain. 2 residues coordinate Mg(2+): Ser-37 and Thr-59.

This sequence belongs to the TRAFAC class TrmE-Era-EngA-EngB-Septin-like GTPase superfamily. EngB GTPase family. Mg(2+) is required as a cofactor.

Functionally, necessary for normal cell division and for the maintenance of normal septation. The protein is Probable GTP-binding protein EngB of Neisseria gonorrhoeae (strain ATCC 700825 / FA 1090).